A 271-amino-acid polypeptide reads, in one-letter code: Elongation factor Ts (271 aa).

Residues T76–V79 form an involved in Mg(2+) ion dislocation from EF-Tu region.

This sequence belongs to the EF-Ts family.

It localises to the cytoplasm. Associates with the EF-Tu.GDP complex and induces the exchange of GDP to GTP. It remains bound to the aminoacyl-tRNA.EF-Tu.GTP complex up to the GTP hydrolysis stage on the ribosome. In Mycobacterium bovis (strain BCG / Pasteur 1173P2), this protein is Elongation factor Ts.